Reading from the N-terminus, the 582-residue chain is Membrane protein insertase YidC (582 aa).

Residues Ile-3–Trp-23 form a helical membrane-spanning segment. A disordered region spans residues Gln-38–Glu-92. The segment covering Ser-45 to Ser-58 has biased composition (low complexity). The span at Gln-59–Pro-74 shows a compositional bias: polar residues. 5 helical membrane passes run Thr-357 to Leu-377, Gly-394 to Phe-414, Leu-464 to Leu-484, Phe-495 to Met-515, and Met-541 to Leu-561.

This sequence belongs to the OXA1/ALB3/YidC family. Type 1 subfamily. In terms of assembly, interacts with the Sec translocase complex via SecD. Specifically interacts with transmembrane segments of nascent integral membrane proteins during membrane integration.

It localises to the cell inner membrane. Its function is as follows. Required for the insertion and/or proper folding and/or complex formation of integral membrane proteins into the membrane. Involved in integration of membrane proteins that insert both dependently and independently of the Sec translocase complex, as well as at least some lipoproteins. Aids folding of multispanning membrane proteins. This chain is Membrane protein insertase YidC, found in Alcanivorax borkumensis (strain ATCC 700651 / DSM 11573 / NCIMB 13689 / SK2).